Here is a 435-residue protein sequence, read N- to C-terminus: Amino acid transporter AVT6C (435 aa).

Residues 1-24 (MTPQIKTHLLPKQEPSSSENHGSS) form a disordered region. 11 consecutive transmembrane segments (helical) span residues 28 to 48 (IVFNVSTSIIGAGIMSMPAAF), 53 to 73 (IVPAFLIITIIAWLSTISVGF), 100 to 120 (IAVQIATMVATFGCMIIFSII), 148 to 168 (WNTRIFALLFVYGFVLLPLVL), 181 to 201 (VSFLLAVLFVVISSVLAISAL), 219 to 239 (GSFWQLFTASPVIVTAFTFHF), 260 to 280 (ISVILCAAIYFATGLFGYLLF), 307 to 327 (IVRLSYVLHLMLVFPLLNFSL), 354 to 374 (LALLICCFLSAIAVPDIWYFF), 375 to 395 (QFMGSTITVSIAFIFPAAIVL), and 408 to 428 (IVAAIMLVLAVATSIIAISTN).

Belongs to the amino acid/polyamine transporter 2 family. Amino acid/auxin permease (AAAP) (TC 2.A.18.6) subfamily.

It is found in the membrane. The polypeptide is Amino acid transporter AVT6C (Arabidopsis thaliana (Mouse-ear cress)).